A 97-amino-acid polypeptide reads, in one-letter code: Unclassified hydrophobin F (97 aa).

Positions 1 to 17 (MRVSALAFAAVLSLVSA) are cleaved as a signal peptide. 4 disulfide bridges follow: Cys24/Cys75, Cys39/Cys67, Cys40/Cys58, and Cys76/Cys85.

Its subcellular location is the secreted. It is found in the cell wall. Aerial growth, conidiation, and dispersal of filamentous fungi in the environment rely upon a capability of their secreting small amphipathic proteins called hydrophobins (HPBs) with low sequence identity. Class I can self-assemble into an outermost layer of rodlet bundles on aerial cell surfaces, conferring cellular hydrophobicity that supports fungal growth, development and dispersal; whereas Class II form highly ordered films at water-air interfaces through intermolecular interactions but contribute nothing to the rodlet structure. In P.expansum, hydrophobins contribute to germination, tolerance to cold stress and mycotoxins patulin and citrinin production. HfbC, HfbD, HfbE, and HfbF have functional redundancy in fungal surface hydrophobicity. The chain is Unclassified hydrophobin F from Penicillium expansum (Blue mold rot fungus).